The chain runs to 362 residues: Resuscitation-promoting factor RpfB (362 aa).

The N-terminal stretch at 1-22 (MLRGVVGAFLVSLTVAGSYAVA) is a signal peptide. One can recognise a G5 domain in the interval 192–272 (VTRMRIEKVT…NGVLRVGAKP (81 aa)).

It belongs to the transglycosylase family. Rpf subfamily.

Factor that stimulates resuscitation of dormant cells. Has peptidoglycan (PG) hydrolytic activity. Active in the pM concentration range. Has little to no effect on actively-growing cells. PG fragments could either directly activate the resuscitation pathway of dormant bacteria or serve as a substrate for endogenous Rpf, resulting in low molecular weight products with resuscitation activity. In Mycolicibacterium smegmatis (strain ATCC 700084 / mc(2)155) (Mycobacterium smegmatis), this protein is Resuscitation-promoting factor RpfB (rpfB).